We begin with the raw amino-acid sequence, 240 residues long: Lysoplasmalogenase TMEM86A (240 aa).

The Cytoplasmic portion of the chain corresponds to 1-21 (MVSPVTVVKSEGPKLVPFFKA). A helical membrane pass occupies residues 22 to 42 (TCVYFVLWLPSSSPSWVSALI). Residue Lys-43 is a topological domain, extracellular. Residues 44-64 (CLPIFCLWLFLLAHGLGFLLT) traverse the membrane as a helical segment. The Cytoplasmic segment spans residues 65–70 (HPSATR). The helical transmembrane segment at 71–91 (IFVGLVFSAIGDAFLIWQDQG) threads the bilayer. Residue Tyr-92 is a topological domain, extracellular. The chain crosses the membrane as a helical span at residues 93 to 113 (FVHGMLMFAVTHMLYASAFGM). Residues 114–115 (RP) are Cytoplasmic-facing. Residues 116-136 (LGLRTGLLMVILSGLCYAFLY) traverse the membrane as a helical segment. Topologically, residues 137 to 138 (PN) are extracellular. A helical transmembrane segment spans residues 139-159 (LTGAFTYVVGVYVAIIGFMGW). The Cytoplasmic segment spans residues 160–174 (RAMAGLQLVGAAWRW). Residues 175 to 195 (TELAAGTGALLFIVSDLTIAL) traverse the membrane as a helical segment. Over 196 to 206 (DKFCFPVPYSR) the chain is Extracellular. Residues 207–227 (ALIMSTYYAAQMLIALSAVES) traverse the membrane as a helical segment. The Cytoplasmic segment spans residues 228-240 (REPVEDYRLSKAK).

Belongs to the TMEM86 family.

The protein localises to the endoplasmic reticulum membrane. It carries out the reaction a 1-O-(1Z-alkenyl)-sn-glycero-3-phosphocholine + H2O = a 2,3-saturated aldehyde + sn-glycerol 3-phosphocholine. The enzyme catalyses a 1-O-(1Z-alkenyl)-sn-glycero-3-phosphoethanolamine + H2O = a 2,3-saturated aldehyde + sn-glycero-3-phosphoethanolamine. Its function is as follows. Catalyzes the hydrolysis of the vinyl ether bond of choline or ethanolamine lysoplasmalogens, forming fatty aldehyde and glycerophosphocholine or glycerophosphoethanolamine, respectively and is specific for the sn-2-deacylated (lyso) form of plasmalogen. Plays an important role in lysoplasmalogen metabolism in the adipocyte tissue and macrophages. The polypeptide is Lysoplasmalogenase TMEM86A (TMEM86A) (Bos taurus (Bovine)).